We begin with the raw amino-acid sequence, 390 residues long: Phosphoglycerate kinase (390 aa).

Residues 21 to 23 (DLN), R36, 59 to 62 (HLGR), R112, and R145 each bind substrate. ATP-binding positions include K196, E317, and 343-346 (GGDT).

It belongs to the phosphoglycerate kinase family. As to quaternary structure, monomer.

It is found in the cytoplasm. The enzyme catalyses (2R)-3-phosphoglycerate + ATP = (2R)-3-phospho-glyceroyl phosphate + ADP. It participates in carbohydrate degradation; glycolysis; pyruvate from D-glyceraldehyde 3-phosphate: step 2/5. The polypeptide is Phosphoglycerate kinase (Cellvibrio japonicus (strain Ueda107) (Pseudomonas fluorescens subsp. cellulosa)).